The primary structure comprises 212 residues: Redox-sensing transcriptional repressor Rex (212 aa).

The H-T-H motif DNA-binding region spans 18–57 (LYYRFVNTLKSKGIDRVNSKAISEALNIESATIRRDFSYF). 92 to 97 (GVGNLG) contributes to the NAD(+) binding site.

It belongs to the transcriptional regulatory Rex family. As to quaternary structure, homodimer.

The protein resides in the cytoplasm. Functionally, modulates transcription in response to changes in cellular NADH/NAD(+) redox state. This chain is Redox-sensing transcriptional repressor Rex, found in Staphylococcus haemolyticus (strain JCSC1435).